We begin with the raw amino-acid sequence, 251 residues long: Mycofactocin precursor peptide peptidase (251 aa).

Glutamate 38, histidine 40, aspartate 49, histidine 128, and glutamate 167 together coordinate a divalent metal cation.

Belongs to the creatininase superfamily. In terms of assembly, homooctamer. It depends on Fe(2+) as a cofactor. Zn(2+) serves as cofactor.

It carries out the reaction [mycofactocin precursor peptide]-C-terminal glycyl-N-{5-[(4-hydroxyphenyl)methyl]-4,4-dimethyl-2-oxopyrrolidin-3-yl}acetamide + H2O = [mycofactocin precursor peptide]-C-terminal glycine + 3-amino-5-[(4-hydroxyphenyl)methyl]-4,4-dimethyl-2-pyrrolidin-2-one. In terms of biological role, peptidase involved in the biosynthesis of the enzyme cofactor mycofactocin (MFT). Catalyzes cleavage of the MftC-modified MftA peptide to liberate its final two residues, which consist of a cross-linked valine-decarboxylated tyrosine dipeptide (named 3-amino-5-[(4-hydroxyphenyl)methyl]-4,4-dimethyl-2-pyrrolidin-2-one or ADHP). This chain is Mycofactocin precursor peptide peptidase (mftE), found in Mycobacterium tuberculosis (strain CDC 1551 / Oshkosh).